Consider the following 379-residue polypeptide: Probable pectin lyase A (379 aa).

A signal peptide spans 1-20 (MKYSTIFSAAAAVFAGSAAA). 2 disulfide bridges follow: Cys-83–Cys-102 and Cys-92–Cys-226. A glycan (N-linked (GlcNAc...) asparagine) is linked at Asn-129. Arg-256 is an active-site residue. A disulfide bond links Cys-322 and Cys-330.

This sequence belongs to the polysaccharide lyase 1 family.

It localises to the secreted. It carries out the reaction Eliminative cleavage of (1-&gt;4)-alpha-D-galacturonan methyl ester to give oligosaccharides with 4-deoxy-6-O-methyl-alpha-D-galact-4-enuronosyl groups at their non-reducing ends.. In terms of biological role, pectinolytic enzymes consist of four classes of enzymes: pectin lyase, polygalacturonase, pectin methylesterase and rhamnogalacturonase. Among pectinolytic enzymes, pectin lyase is the most important in depolymerization of pectin, since it cleaves internal glycosidic bonds of highly methylated pectins. This chain is Probable pectin lyase A (pelA), found in Aspergillus niger (strain ATCC MYA-4892 / CBS 513.88 / FGSC A1513).